A 225-amino-acid chain; its full sequence is Red fluorescent protein drFP583 (225 aa).

Residues 66–68 (QYG) constitute a cross-link (2-iminomethyl-5-imidazolinone (Gln-Gly)). Position 67 is a (Z)-2,3-didehydrotyrosine (tyrosine 67).

This sequence belongs to the GFP family. As to quaternary structure, homotetramer. Post-translationally, contains a chromophore consisting of modified amino acid residues. The chromophore is formed by autocatalytic backbone condensation between Xaa-N and Gly-(N+2), oxidation of Tyr-(N+1) to didehydrotyrosine, and formation of a double bond to the alpha-amino nitrogen of residue Xaa-N. Maturation of the chromophore requires nothing other than molecular oxygen.

Its function is as follows. Thought to play a role in photoprotection of the coral's resident symbiont microalgae's photosystems from photoinhibition caused by high light levels found near the surface of coral reefs. In deeper water, the fluorescence may be to convert blue light into longer wavelengths more suitable for use in photosynthesis by the microalgal symbionts. This chain is Red fluorescent protein drFP583, found in Discosoma sp. (Sea anemone).